The primary structure comprises 157 residues: Small ribosomal subunit protein uS7 (157 aa).

It belongs to the universal ribosomal protein uS7 family. Part of the 30S ribosomal subunit. Contacts proteins S9 and S11.

In terms of biological role, one of the primary rRNA binding proteins, it binds directly to 16S rRNA where it nucleates assembly of the head domain of the 30S subunit. Is located at the subunit interface close to the decoding center, probably blocks exit of the E-site tRNA. The polypeptide is Small ribosomal subunit protein uS7 (Borrelia garinii subsp. bavariensis (strain ATCC BAA-2496 / DSM 23469 / PBi) (Borreliella bavariensis)).